A 140-amino-acid polypeptide reads, in one-letter code: Cysteine desulfuration protein SufE (140 aa).

The Cysteine persulfide intermediate role is filled by C51.

Belongs to the SufE family. Homodimer. Interacts with SufS.

Its subcellular location is the cytoplasm. It participates in cofactor biosynthesis; iron-sulfur cluster biosynthesis. In terms of biological role, participates in cysteine desulfuration mediated by SufS. Cysteine desulfuration mobilizes sulfur from L-cysteine to yield L-alanine and constitutes an essential step in sulfur metabolism for biosynthesis of a variety of sulfur-containing biomolecules. Functions as a sulfur acceptor for SufS, by mediating the direct transfer of the sulfur atom from the S-sulfanylcysteine of SufS, an intermediate product of cysteine desulfuration process. In Yersinia pestis bv. Antiqua (strain Antiqua), this protein is Cysteine desulfuration protein SufE.